The chain runs to 277 residues: Ribosomal RNA small subunit methyltransferase A (277 aa).

Positions 15, 17, 42, 64, 89, and 109 each coordinate S-adenosyl-L-methionine.

It belongs to the class I-like SAM-binding methyltransferase superfamily. rRNA adenine N(6)-methyltransferase family. RsmA subfamily.

It localises to the cytoplasm. It catalyses the reaction adenosine(1518)/adenosine(1519) in 16S rRNA + 4 S-adenosyl-L-methionine = N(6)-dimethyladenosine(1518)/N(6)-dimethyladenosine(1519) in 16S rRNA + 4 S-adenosyl-L-homocysteine + 4 H(+). Functionally, specifically dimethylates two adjacent adenosines (A1518 and A1519) in the loop of a conserved hairpin near the 3'-end of 16S rRNA in the 30S particle. May play a critical role in biogenesis of 30S subunits. The protein is Ribosomal RNA small subunit methyltransferase A of Synechococcus sp. (strain CC9311).